The primary structure comprises 194 residues: Translationally-controlled tumor protein homolog 2 (194 aa).

The TCTP domain maps to 1-194; it reads MKLYKDLIGN…IKYGLLQVDV (194 aa).

This sequence belongs to the TCTP family.

Its subcellular location is the cytoplasm. Functionally, involved in calcium binding and microtubule stabilization. This Dictyostelium discoideum (Social amoeba) protein is Translationally-controlled tumor protein homolog 2.